A 200-amino-acid polypeptide reads, in one-letter code: uncharacterized protein (200 aa).

The signal sequence occupies residues 1-24; that stretch reads MSRVFSCVLRACVCAGLCCWVCMG. The tract at residues 124 to 200 is disordered; it reads GGRDLPMHGA…GEGGDNGEGE (77 aa). Residues 184 to 200 show a composition bias toward acidic residues; it reads LGDEGETGEGGDNGEGE.

This is an uncharacterized protein from Homo sapiens (Human).